The following is a 606-amino-acid chain: NADH-ubiquinone oxidoreductase chain 5 (606 aa).

16 helical membrane-spanning segments follow: residues 1–21 (MNIF…PIIA), 38–58 (NIIS…IYSG), 87–107 (MIFV…SIWY), 114–134 (ITQF…LVTA), 140–160 (LFIG…WWYG), 171–191 (AILY…WFLS), 213–233 (LMGL…HPWL), 241–261 (TPVS…FLLI), 273–293 (AQTL…ICAL), 301–320 (IIAF…IGIN), 325–347 (AFLH…GSII), 366–386 (MPFT…MPFL), 409–429 (LLMT…MIFF), 457–477 (LLIG…PTTT), 488–508 (LMAL…SLAT), and 582–602 (GLIK…LLLL).

Belongs to the complex I subunit 5 family. As to quaternary structure, core subunit of respiratory chain NADH dehydrogenase (Complex I) which is composed of 45 different subunits.

It is found in the mitochondrion inner membrane. The enzyme catalyses a ubiquinone + NADH + 5 H(+)(in) = a ubiquinol + NAD(+) + 4 H(+)(out). In terms of biological role, core subunit of the mitochondrial membrane respiratory chain NADH dehydrogenase (Complex I) which catalyzes electron transfer from NADH through the respiratory chain, using ubiquinone as an electron acceptor. Essential for the catalytic activity and assembly of complex I. The polypeptide is NADH-ubiquinone oxidoreductase chain 5 (MT-ND5) (Rhinoceros unicornis (Greater Indian rhinoceros)).